The sequence spans 324 residues: Glycerol-3-phosphate dehydrogenase [NAD(P)+] (324 aa).

NADPH is bound by residues tryptophan 15, arginine 35, and lysine 101. Sn-glycerol 3-phosphate-binding residues include lysine 101 and glycine 129. Alanine 133 serves as a coordination point for NADPH. The sn-glycerol 3-phosphate site is built by lysine 184, aspartate 237, serine 247, arginine 248, and asparagine 249. Catalysis depends on lysine 184, which acts as the Proton acceptor. Arginine 248 serves as a coordination point for NADPH. Valine 272 and glutamate 274 together coordinate NADPH.

Belongs to the NAD-dependent glycerol-3-phosphate dehydrogenase family.

The protein localises to the cytoplasm. It carries out the reaction sn-glycerol 3-phosphate + NAD(+) = dihydroxyacetone phosphate + NADH + H(+). It catalyses the reaction sn-glycerol 3-phosphate + NADP(+) = dihydroxyacetone phosphate + NADPH + H(+). The protein operates within membrane lipid metabolism; glycerophospholipid metabolism. Its function is as follows. Catalyzes the reduction of the glycolytic intermediate dihydroxyacetone phosphate (DHAP) to sn-glycerol 3-phosphate (G3P), the key precursor for phospholipid synthesis. In Gluconobacter oxydans (strain 621H) (Gluconobacter suboxydans), this protein is Glycerol-3-phosphate dehydrogenase [NAD(P)+].